A 216-amino-acid chain; its full sequence is MOB kinase activator-like 1 homolog C (216 aa).

Residues cysteine 78, cysteine 83, histidine 160, and histidine 165 each contribute to the Zn(2+) site.

The protein belongs to the MOB1/phocein family.

This Dictyostelium discoideum (Social amoeba) protein is MOB kinase activator-like 1 homolog C (mobC).